The following is a 177-amino-acid chain: Isopentenyl-diphosphate Delta-isomerase (177 aa).

Residues His22 and His28 each coordinate Mn(2+). Residues 26–160 form the Nudix hydrolase domain; that stretch reads LRHKAISVFV…PERFTPWLRI (135 aa). Cys62 is a catalytic residue. A Mn(2+)-binding site is contributed by His64. Glu82 provides a ligand contact to Mg(2+). 2 residues coordinate Mn(2+): Glu108 and Glu110. The active site involves Glu110.

This sequence belongs to the IPP isomerase type 1 family. Mg(2+) serves as cofactor. Mn(2+) is required as a cofactor.

It localises to the cytoplasm. It carries out the reaction isopentenyl diphosphate = dimethylallyl diphosphate. It participates in isoprenoid biosynthesis; dimethylallyl diphosphate biosynthesis; dimethylallyl diphosphate from isopentenyl diphosphate: step 1/1. The protein operates within porphyrin-containing compound metabolism; chlorophyll biosynthesis. Functionally, catalyzes the 1,3-allylic rearrangement of the homoallylic substrate isopentenyl (IPP) to its highly electrophilic allylic isomer, dimethylallyl diphosphate (DMAPP). The sequence is that of Isopentenyl-diphosphate Delta-isomerase from Cereibacter sphaeroides (strain ATCC 17025 / ATH 2.4.3) (Rhodobacter sphaeroides).